Consider the following 207-residue polypeptide: Guanylate kinase (207 aa).

In terms of domain architecture, Guanylate kinase-like spans 4-184; that stretch reads GTLYIVSAPS…ALTDLKTIIR (181 aa). An ATP-binding site is contributed by 11-18; the sequence is APSGAGKS.

Belongs to the guanylate kinase family.

It localises to the cytoplasm. The enzyme catalyses GMP + ATP = GDP + ADP. Essential for recycling GMP and indirectly, cGMP. The chain is Guanylate kinase from Escherichia coli O6:K15:H31 (strain 536 / UPEC).